The sequence spans 166 residues: MALSVRILGIDPGLRRMGWGVIRVEGSRLSAIAHGVVTPPTAAPLSERLMHLFNSVGDLVRQHGPDEAAIEEAFMAANAASALKLGHARAAAMLAPARAGLPVAEYAARLVKKSVVGTGAADKAQVAAMVGILLPGTKATADAADALAIAICHAHHRRATSLGSAA.

Active-site residues include Asp-11, Glu-71, and Asp-142. Residues Asp-11, Glu-71, and Asp-142 each coordinate Mg(2+).

The protein belongs to the RuvC family. Homodimer which binds Holliday junction (HJ) DNA. The HJ becomes 2-fold symmetrical on binding to RuvC with unstacked arms; it has a different conformation from HJ DNA in complex with RuvA. In the full resolvosome a probable DNA-RuvA(4)-RuvB(12)-RuvC(2) complex forms which resolves the HJ. The cofactor is Mg(2+).

The protein resides in the cytoplasm. The catalysed reaction is Endonucleolytic cleavage at a junction such as a reciprocal single-stranded crossover between two homologous DNA duplexes (Holliday junction).. The RuvA-RuvB-RuvC complex processes Holliday junction (HJ) DNA during genetic recombination and DNA repair. Endonuclease that resolves HJ intermediates. Cleaves cruciform DNA by making single-stranded nicks across the HJ at symmetrical positions within the homologous arms, yielding a 5'-phosphate and a 3'-hydroxyl group; requires a central core of homology in the junction. The consensus cleavage sequence is 5'-(A/T)TT(C/G)-3'. Cleavage occurs on the 3'-side of the TT dinucleotide at the point of strand exchange. HJ branch migration catalyzed by RuvA-RuvB allows RuvC to scan DNA until it finds its consensus sequence, where it cleaves and resolves the cruciform DNA. The protein is Crossover junction endodeoxyribonuclease RuvC of Maricaulis maris (strain MCS10) (Caulobacter maris).